We begin with the raw amino-acid sequence, 345 residues long: CRISPR-associated endonuclease Cas1 1 (345 aa).

Positions 168, 239, and 254 each coordinate a divalent metal cation.

Belongs to the CRISPR-associated endonuclease Cas1 family. As to quaternary structure, forms a heterotetramer with a Cas2 homodimer. Homodimer. A divalent metal cation is required as a cofactor.

CRISPR (clustered regularly interspaced short palindromic repeat), is an adaptive immune system that provides protection against mobile genetic elements (viruses, transposable elements and conjugative plasmids). CRISPR clusters contain sequences complementary to antecedent mobile elements and target invading nucleic acids. CRISPR clusters are transcribed and processed into CRISPR RNA (crRNA). Involved in the integration of spacer DNA into the CRISPR cassette. Acts as a dsDNA and ssRNA nuclease, binds to linear and circular dsDNA and linear ssRNA and ssDNA. This Archaeoglobus fulgidus (strain ATCC 49558 / DSM 4304 / JCM 9628 / NBRC 100126 / VC-16) protein is CRISPR-associated endonuclease Cas1 1.